A 338-amino-acid chain; its full sequence is Oxygen-dependent coproporphyrinogen-III oxidase (338 aa).

Ser104 contacts substrate. A divalent metal cation contacts are provided by His108 and His118. The active-site Proton donor is His118. 120–122 (NYR) is a binding site for substrate. Positions 152 and 182 each coordinate a divalent metal cation. An important for dimerization region spans residues 274 to 309 (YVEFNLVYDRGTIFGLQTNGRTESILMSLPPLVRWE).

This sequence belongs to the aerobic coproporphyrinogen-III oxidase family. Homodimer. Requires a divalent metal cation as cofactor.

It localises to the cytoplasm. The enzyme catalyses coproporphyrinogen III + O2 + 2 H(+) = protoporphyrinogen IX + 2 CO2 + 2 H2O. It participates in porphyrin-containing compound metabolism; protoporphyrin-IX biosynthesis; protoporphyrinogen-IX from coproporphyrinogen-III (O2 route): step 1/1. Its function is as follows. Involved in the heme and chlorophyll biosynthesis. Catalyzes the aerobic oxidative decarboxylation of propionate groups of rings A and B of coproporphyrinogen-III to yield the vinyl groups in protoporphyrinogen-IX. This is Oxygen-dependent coproporphyrinogen-III oxidase from Thermosynechococcus vestitus (strain NIES-2133 / IAM M-273 / BP-1).